Reading from the N-terminus, the 412-residue chain is L-cysteine:1D-myo-inositol 2-amino-2-deoxy-alpha-D-glucopyranoside ligase (412 aa).

C45 lines the Zn(2+) pocket. L-cysteinyl-5'-AMP-binding positions include 45–48 (CGIT), T60, and 83–85 (NIT). The 'HIGH' region motif lies at 47-57 (ITPYDAAHLGH). A 'ERGGDP' region motif is present at residues 185–190 (ERGGDP). W225 contacts L-cysteinyl-5'-AMP. C229 contacts Zn(2+). Residue 247–249 (GDD) participates in L-cysteinyl-5'-AMP binding. H254 is a Zn(2+) binding site. L-cysteinyl-5'-AMP is bound at residue V281. The 'KMSKS' region motif lies at 287–291 (KMSKS).

The protein belongs to the class-I aminoacyl-tRNA synthetase family. MshC subfamily. Monomer. Zn(2+) is required as a cofactor.

It carries out the reaction 1D-myo-inositol 2-amino-2-deoxy-alpha-D-glucopyranoside + L-cysteine + ATP = 1D-myo-inositol 2-(L-cysteinylamino)-2-deoxy-alpha-D-glucopyranoside + AMP + diphosphate + H(+). Its function is as follows. Catalyzes the ATP-dependent condensation of GlcN-Ins and L-cysteine to form L-Cys-GlcN-Ins. The polypeptide is L-cysteine:1D-myo-inositol 2-amino-2-deoxy-alpha-D-glucopyranoside ligase (Thermobifida fusca (strain YX)).